Consider the following 437-residue polypeptide: Proline--tRNA ligase (437 aa).

It belongs to the class-II aminoacyl-tRNA synthetase family. ProS type 2 subfamily. As to quaternary structure, homodimer.

It is found in the cytoplasm. The enzyme catalyses tRNA(Pro) + L-proline + ATP = L-prolyl-tRNA(Pro) + AMP + diphosphate. In terms of biological role, catalyzes the attachment of proline to tRNA(Pro) in a two-step reaction: proline is first activated by ATP to form Pro-AMP and then transferred to the acceptor end of tRNA(Pro). This Rhizorhabdus wittichii (strain DSM 6014 / CCUG 31198 / JCM 15750 / NBRC 105917 / EY 4224 / RW1) (Sphingomonas wittichii) protein is Proline--tRNA ligase.